We begin with the raw amino-acid sequence, 540 residues long: Amino acid transporter AVT1B (540 aa).

Over residues 1–11 (MNHSTSDQSLY) the composition is skewed to polar residues. A disordered region spans residues 1–55 (MNHSTSDQSLYIESDDGDDERKHLSDDEDDDGTLSDTSDAYNQNQHHLSKASPYS). The next 11 membrane-spanning stretches (helical) occupy residues 155–175 (AVLNGVNVLCGVGILSTPYAV), 180–200 (WLGLIILFAFGILCFYTGLLL), 227–247 (ILVSVILYMELYAMSVEYIIL), 273–293 (LFALLTTLAVLPTVWLRDLSV), 297–317 (ISAGGVIASVLVVLCLFWVGL), 332–352 (LATLPVSVGLYGYCYSGHGVF), 367–387 (AVLLASFGICTLMYAGVAVMG), 412–432 (IALWTTVVNPFTKYALTLSPV), 452–474 (IAIRSALAISTLLVGLAIPFFGL), 478–500 (LIGSFLTMLITLILPPACFLSIL), and 511–531 (ICILIMTVGAVCSVIGTYSAL).

This sequence belongs to the amino acid/polyamine transporter 2 family. Amino acid/auxin permease (AAAP) (TC 2.A.18.5) subfamily.

It localises to the membrane. This is Amino acid transporter AVT1B from Arabidopsis thaliana (Mouse-ear cress).